Consider the following 360-residue polypeptide: Chorismate synthase (360 aa).

Residues arginine 48 and arginine 54 each contribute to the NADP(+) site. FMN contacts are provided by residues 125 to 127 (RSS), 246 to 247 (NA), glycine 286, 301 to 305 (KPTSS), and arginine 327.

This sequence belongs to the chorismate synthase family. In terms of assembly, homotetramer. Requires FMNH2 as cofactor.

It catalyses the reaction 5-O-(1-carboxyvinyl)-3-phosphoshikimate = chorismate + phosphate. It participates in metabolic intermediate biosynthesis; chorismate biosynthesis; chorismate from D-erythrose 4-phosphate and phosphoenolpyruvate: step 7/7. Catalyzes the anti-1,4-elimination of the C-3 phosphate and the C-6 proR hydrogen from 5-enolpyruvylshikimate-3-phosphate (EPSP) to yield chorismate, which is the branch point compound that serves as the starting substrate for the three terminal pathways of aromatic amino acid biosynthesis. This reaction introduces a second double bond into the aromatic ring system. This Glaesserella parasuis serovar 5 (strain SH0165) (Haemophilus parasuis) protein is Chorismate synthase.